The sequence spans 166 residues: Mitochondrial translation release factor in rescue (166 aa).

The transit peptide at 1 to 35 (MSTVGLFHFPTPLTRICPAPWGLRLWEKLTLLSPG) directs the protein to the mitochondrion. Residues 57–121 (ENELEEQFVK…LQEKVDVFYN (65 aa)) form a GGQ domain region. Positions 71 to 73 (GGQ) match the GGQ motif. An N5-methylglutamine modification is found at Gln-73. The segment at 122–148 (GENSPVHKEKREAAKKKQERKKRAKET) is disordered. The segment covering 126 to 137 (PVHKEKREAAKK) has biased composition (basic and acidic residues). Residues 127-160 (VHKEKREAAKKKQERKKRAKETLEKKKLLKELWE) adopt a coiled-coil conformation.

The protein belongs to the prokaryotic/mitochondrial release factor family. As to quaternary structure, interacts (via C-terminus) with MTRES1 (via S4 domain). Associates with mitoribosomal S39 large subunit, peptidyl tRNA and nascent chain. In terms of processing, methylation of glutamine in the GGQ triplet by HEMK1. As to expression, expressed in all areas of the brain tested.

The protein localises to the mitochondrion. Functionally, part of a mitoribosome-associated quality control pathway that prevents aberrant translation by responding to interruptions during elongation. As heterodimer with MTRES1, ejects the unfinished nascent chain and peptidyl transfer RNA (tRNA), respectively, from stalled ribosomes. Recruitment of mitoribosome biogenesis factors to these quality control intermediates suggests additional roles for MTRES1 and MTRF during mitoribosome rescue. This Homo sapiens (Human) protein is Mitochondrial translation release factor in rescue.